Consider the following 82-residue polypeptide: Toxin TdNa6 (82 aa).

Residues 1-20 (MKGMIMLISCLMLIEVVVGG) form the signal peptide. In terms of domain architecture, LCN-type CS-alpha/beta spans 21 to 82 (KEGYLLDRSN…KMWHLKTNKC (62 aa)). Intrachain disulfides connect C32-C82, C36-C58, C44-C63, and C48-C65.

The protein belongs to the long (4 C-C) scorpion toxin superfamily. Sodium channel inhibitor family. Beta subfamily. As to expression, expressed by the venom gland.

It is found in the secreted. Functionally, beta toxins bind voltage-independently at site-4 of sodium channels (Nav) and shift the voltage of activation toward more negative potentials thereby affecting sodium channel activation and promoting spontaneous and repetitive firing. Is toxic to arthropods. In Tityus discrepans (Venezuelan scorpion), this protein is Toxin TdNa6.